We begin with the raw amino-acid sequence, 83 residues long: Apolipoprotein C-I, basic form (83 aa).

The first 26 residues, 1-26, serve as a signal peptide directing secretion; sequence MRLFLSLPVLVVVLSMVLEGPAPVQG.

It belongs to the apolipoprotein C1 family.

It is found in the secreted. Functionally, inhibitor of lipoprotein binding to the low density lipoprotein (LDL) receptor, LDL receptor-related protein, and very low density lipoprotein (VLDL) receptor. Associates with high density lipoproteins (HDL) and the triacylglycerol-rich lipoproteins in the plasma and makes up about 10% of the protein of the VLDL and 2% of that of HDL. Appears to interfere directly with fatty acid uptake and is also the major plasma inhibitor of cholesteryl ester transfer protein (CETP). Binds free fatty acids and reduces their intracellular esterification. Modulates the interaction of APOE with beta-migrating VLDL and inhibits binding of beta-VLDL to the LDL receptor-related protein. In Papio anubis (Olive baboon), this protein is Apolipoprotein C-I, basic form (APOC1).